A 944-amino-acid chain; its full sequence is Calcium-transporting ATPase type 2C member 2 (944 aa).

At 1 to 104 the chain is on the cytoplasmic side; it reads MGRRFKFLQK…DNTEPVWKKY (104 aa). The interval 69–93 is interaction with ORAI1; sequence VDLDSGLSEFAVAQRRLVHGWNEFV. A helical membrane pass occupies residues 105-125; the sequence is LDQFRNPLILLLLGSSVVSVL. Over 126 to 127 the chain is Extracellular; sequence TK. Residues 128-148 traverse the membrane as a helical segment; that stretch reads EYEDAISIALAVLIVVTVGFI. The Cytoplasmic segment spans residues 149–229; that stretch reads QEYRSEKSLE…EVEPCSKTDS (81 aa). The helical transmembrane segment at 230–250 threads the bilayer; it reads PLAGGGDLSTLSNVVFMGTLV. Topologically, residues 251–291 are extracellular; the sequence is QCGKGQGVVIGTGEQSQFGEVFKMMRAEETPKTPLQKSMDK. Thr-262 is modified (phosphothreonine). Ser-266 bears the Phosphoserine mark. Residues 292 to 312 form a helical membrane-spanning segment; the sequence is LGKQLTVFSFGIIGLLMLVGW. The Cytoplasmic portion of the chain corresponds to 313 to 329; the sequence is VQGKPLLSMFTIGVSLA. Ca(2+) is bound by residues Val-330, Ala-331, Ile-333, and Glu-335. A helical transmembrane segment spans residues 330–350; sequence VAAIPEGLPIVVMVTLVLGVL. The Extracellular segment spans residues 351–748; that stretch reads RMAKKRVIVK…IAALSLITLS (398 aa). Asp-377 functions as the 4-aspartylphosphate intermediate in the catalytic mechanism. The Mg(2+) site is built by Asp-672 and Asp-676. The chain crosses the membrane as a helical span at residues 749-769; the sequence is TVCNLPNPLNAMQILWVNIIM. Asn-766 and Asp-770 together coordinate Ca(2+). Residues 770-802 lie on the Cytoplasmic side of the membrane; that stretch reads DGPPAQSLGVEPVDRDALKRPPRSVKDTILNRA. A helical transmembrane segment spans residues 803–823; that stretch reads LILKILMSAAVILGGTLFIFW. The Extracellular portion of the chain corresponds to 824 to 835; that stretch reads REIPENRTSTPR. The helical transmembrane segment at 836–853 threads the bilayer; the sequence is TTTMAFTCFVFFDLFNAL. The Cytoplasmic segment spans residues 854–872; that stretch reads SCRSQTKLIFEIGFFRNRM. A helical transmembrane segment spans residues 873–893; the sequence is FLYSILGSLLGQLAVIYAPPL. Residues 894 to 903 lie on the Extracellular side of the membrane; the sequence is QKVFQTENLS. Residues 904–924 traverse the membrane as a helical segment; it reads ALDLLLLTGLASSVFILSELL. The Cytoplasmic segment spans residues 925 to 944; it reads KLCEKFCSRAKADQMLPEAV.

This sequence belongs to the cation transport ATPase (P-type) (TC 3.A.3) family. Type IIA subfamily. As to quaternary structure, interacts (via N-terminus) with ORAI1 (via N- and C-termini); this interaction regulates Ca(2+) influx at the plasma membrane.

It localises to the golgi apparatus. The protein resides in the trans-Golgi network membrane. Its subcellular location is the cell membrane. The protein localises to the basolateral cell membrane. It catalyses the reaction Ca(2+)(in) + ATP + H2O = Ca(2+)(out) + ADP + phosphate + H(+). The enzyme catalyses Mn(2+)(in) + ATP + H2O = Mn(2+)(out) + ADP + phosphate + H(+). ATP-driven pump that supplies the Golgi apparatus with Ca(2+) and Mn(2+) ions, both essential cofactors for processing and trafficking of newly synthesized proteins in the secretory pathway. Within a catalytic cycle, acquires Ca(2+) or Mn(2+) ions on the cytoplasmic side of the membrane and delivers them to the lumenal side. The transfer of ions across the membrane is coupled to ATP hydrolysis and is associated with a transient phosphorylation that shifts the pump conformation from inward-facing to outward-facing state. Induces Ca(2+) influx independently of its ATP-driven pump function. At the basolateral membrane of mammary epithelial cells, interacts with Ca(2+) channel ORAI1 and mediates Ca(2+) entry independently of the Ca(2+) content of endoplasmic reticulum or Golgi stores. May facilitate transepithelial transport of large quantities of Ca(2+) for milk secretion via activation of Ca(2+) influx channels at the plasma membrane and active Ca(2+) transport at the Golgi apparatus. In Rattus norvegicus (Rat), this protein is Calcium-transporting ATPase type 2C member 2 (Atp2c2).